Consider the following 1395-residue polypeptide: DNA-directed RNA polymerase subunit beta' (1395 aa).

The Zn(2+) site is built by Cys70, Cys72, Cys85, and Cys88. Mg(2+)-binding residues include Asp460, Asp462, and Asp464. Zn(2+)-binding residues include Cys814, Cys888, Cys895, and Cys898.

The protein belongs to the RNA polymerase beta' chain family. The RNAP catalytic core consists of 2 alpha, 1 beta, 1 beta' and 1 omega subunit. When a sigma factor is associated with the core the holoenzyme is formed, which can initiate transcription. It depends on Mg(2+) as a cofactor. Requires Zn(2+) as cofactor.

The catalysed reaction is RNA(n) + a ribonucleoside 5'-triphosphate = RNA(n+1) + diphosphate. Its function is as follows. DNA-dependent RNA polymerase catalyzes the transcription of DNA into RNA using the four ribonucleoside triphosphates as substrates. The chain is DNA-directed RNA polymerase subunit beta' from Pseudoalteromonas atlantica (strain T6c / ATCC BAA-1087).